The chain runs to 385 residues: Cell division protein FtsZ (385 aa).

GTP contacts are provided by residues 37–41 (GGGSN), 125–127 (GTG), Glu-156, Lys-160, and Asp-204.

The protein belongs to the FtsZ family. As to quaternary structure, homodimer. Polymerizes to form a dynamic ring structure in a strictly GTP-dependent manner. Interacts directly with several other division proteins.

It is found in the cytoplasm. In terms of biological role, essential cell division protein that forms a contractile ring structure (Z ring) at the future cell division site. The regulation of the ring assembly controls the timing and the location of cell division. One of the functions of the FtsZ ring is to recruit other cell division proteins to the septum to produce a new cell wall between the dividing cells. Binds GTP and shows GTPase activity. In Helicobacter pylori (strain J99 / ATCC 700824) (Campylobacter pylori J99), this protein is Cell division protein FtsZ.